A 118-amino-acid chain; its full sequence is Large ribosomal subunit protein bL20 (118 aa).

This sequence belongs to the bacterial ribosomal protein bL20 family.

In terms of biological role, binds directly to 23S ribosomal RNA and is necessary for the in vitro assembly process of the 50S ribosomal subunit. It is not involved in the protein synthesizing functions of that subunit. This chain is Large ribosomal subunit protein bL20, found in Nostoc punctiforme (strain ATCC 29133 / PCC 73102).